A 160-amino-acid polypeptide reads, in one-letter code: Large ribosomal subunit protein uL15 (160 aa).

Residues 1 to 13 (MKLNELRDNEGAA) are compositionally biased toward basic and acidic residues. Residues 1 to 51 (MKLNELRDNEGAARKKKRVARGPGSGKGKTAGRGIKGQKSRSGVALNGYEG) form a disordered region. Residues 23-35 (PGSGKGKTAGRGI) show a composition bias toward gly residues.

It belongs to the universal ribosomal protein uL15 family. As to quaternary structure, part of the 50S ribosomal subunit.

In terms of biological role, binds to the 23S rRNA. The protein is Large ribosomal subunit protein uL15 of Cereibacter sphaeroides (strain ATCC 17025 / ATH 2.4.3) (Rhodobacter sphaeroides).